The following is a 641-amino-acid chain: Sodium-dependent nutrient amino acid transporter 1 (641 aa).

Residues 1 to 36 are disordered; sequence MELKGVQPSNGSANGNGTTNAASTEKTDAEKHTPER. The Cytoplasmic segment spans residues 1–38; sequence MELKGVQPSNGSANGNGTTNAASTEKTDAEKHTPERTN. Positions 9–24 are enriched in low complexity; sequence SNGSANGNGTTNAAST. A compositionally biased stretch (basic and acidic residues) spans 25–35; the sequence is EKTDAEKHTPE. A run of 3 helical transmembrane segments spans residues 39–59, 72–92, and 109–129; these read WGNG…LGNV, GAFL…MYYL, and SVVP…ICII. Asn-183 and Asn-188 each carry an N-linked (GlcNAc...) asparagine glycan. A run of 9 helical transmembrane segments spans residues 229–249, 258–278, 307–327, 341–361, 401–421, 441–461, 474–494, 516–536, and 552–572; these read PDWK…LVIM, AAYF…IRAV, AVVQ…MFAS, IVTT…FAIL, LFSV…IVAL, VALI…TPGG, TYVV…VYGL, CWSF…MVTI, and IAGW…GLWY.

This sequence belongs to the sodium:neurotransmitter symporter (SNF) (TC 2.A.22) family.

Its subcellular location is the membrane. Its function is as follows. Unusual broad substrate spectrum amino acid:sodium cotransporter that promotes absorption of the D isomers of essential amino acids. Neutral amino acids are the preferred substrates, especially methionine and phenylalanine. The sequence is that of Sodium-dependent nutrient amino acid transporter 1 from Drosophila erecta (Fruit fly).